Here is a 1609-residue protein sequence, read N- to C-terminus: Factor-induced gene 2 protein (1609 aa).

Positions Met-1–Ala-22 are cleaved as a signal peptide. N-linked (GlcNAc...) asparagine glycosylation is present at Asn-29. 3 disordered regions span residues Ser-129 to Ser-165, Ser-196 to Ser-243, and Thr-266 to Val-312. The segment covering Gln-137–Phe-148 has biased composition (polar residues). Residues Leu-150–Ser-165 show a composition bias toward low complexity. Residues Ser-196–Asp-212 show a composition bias toward polar residues. Composition is skewed to low complexity over residues Thr-213–Ser-243 and Thr-274–Ser-285. N-linked (GlcNAc...) asparagine glycosylation occurs at Asn-231. Residues Met-286–Val-312 are compositionally biased toward polar residues. N-linked (GlcNAc...) asparagine glycans are attached at residues Asn-298, Asn-347, Asn-386, Asn-426, Asn-495, Asn-535, Asn-661, Asn-674, and Asn-713. A disordered region spans residues Ala-846–Ser-876. 3 N-linked (GlcNAc...) asparagine glycosylation sites follow: Asn-889, Asn-907, and Asn-1079. The span at Cys-1231–Ala-1243 shows a compositional bias: polar residues. The tract at residues Cys-1231–Ser-1259 is disordered. The segment covering Ser-1244–Ser-1259 has biased composition (low complexity). Asn-1400 carries N-linked (GlcNAc...) asparagine glycosylation. Gly-1588 carries the GPI-anchor amidated glycine lipid modification. A propeptide spans Ser-1589–Ile-1609 (removed in mature form).

Post-translationally, N-glycosylated.

The protein localises to the secreted. The protein resides in the cell wall. It is found in the membrane. Required for efficient mating. Plays a role in maintenance of cell wall integrity during mating. Important for mating cell projection shape and conjugation bridge diameter. Plays a role in cell fusion and nuclear migration. The protein is Factor-induced gene 2 protein (FIG2) of Saccharomyces cerevisiae (strain ATCC 204508 / S288c) (Baker's yeast).